A 218-amino-acid polypeptide reads, in one-letter code: Cytidylate kinase (218 aa).

ATP is bound at residue 11–19 (GPGASGKGT).

Belongs to the cytidylate kinase family. Type 1 subfamily.

Its subcellular location is the cytoplasm. The catalysed reaction is CMP + ATP = CDP + ADP. It catalyses the reaction dCMP + ATP = dCDP + ADP. In Neisseria meningitidis serogroup B (strain ATCC BAA-335 / MC58), this protein is Cytidylate kinase.